The chain runs to 127 residues: Small ribosomal subunit protein uS11c (127 aa).

It belongs to the universal ribosomal protein uS11 family. In terms of assembly, part of the 30S ribosomal subunit.

It localises to the plastid. It is found in the chloroplast. This is Small ribosomal subunit protein uS11c from Heterosigma akashiwo (strain NIES-293 / 8280G21-1).